Reading from the N-terminus, the 211-residue chain is Dephospho-CoA kinase (211 aa).

The 204-residue stretch at 3 to 206 folds into the DPCK domain; the sequence is VIGLTGGIAT…GGRGRRLPNA (204 aa). 11 to 16 provides a ligand contact to ATP; the sequence is ATGKST.

It belongs to the CoaE family.

It is found in the cytoplasm. The catalysed reaction is 3'-dephospho-CoA + ATP = ADP + CoA + H(+). Its pathway is cofactor biosynthesis; coenzyme A biosynthesis; CoA from (R)-pantothenate: step 5/5. In terms of biological role, catalyzes the phosphorylation of the 3'-hydroxyl group of dephosphocoenzyme A to form coenzyme A. This Anaeromyxobacter dehalogenans (strain 2CP-C) protein is Dephospho-CoA kinase.